We begin with the raw amino-acid sequence, 80 residues long: UPF0291 protein YlaC (80 aa).

This sequence belongs to the UPF0291 family.

It localises to the cytoplasm. The chain is UPF0291 protein YlaC (ylcA) from Lactococcus lactis subsp. lactis (strain IL1403) (Streptococcus lactis).